The following is a 158-amino-acid chain: Ribosome maturation factor RimP (158 aa).

Belongs to the RimP family.

Its subcellular location is the cytoplasm. In terms of biological role, required for maturation of 30S ribosomal subunits. The protein is Ribosome maturation factor RimP of Streptococcus suis (strain 98HAH33).